The primary structure comprises 480 residues: 3-isopropylmalate dehydratase large subunit (480 aa).

Residues C360, C418, and C421 each contribute to the [4Fe-4S] cluster site.

This sequence belongs to the aconitase/IPM isomerase family. LeuC type 1 subfamily. Heterodimer of LeuC and LeuD. [4Fe-4S] cluster is required as a cofactor.

The catalysed reaction is (2R,3S)-3-isopropylmalate = (2S)-2-isopropylmalate. The protein operates within amino-acid biosynthesis; L-leucine biosynthesis; L-leucine from 3-methyl-2-oxobutanoate: step 2/4. Its function is as follows. Catalyzes the isomerization between 2-isopropylmalate and 3-isopropylmalate, via the formation of 2-isopropylmaleate. The chain is 3-isopropylmalate dehydratase large subunit from Anaeromyxobacter dehalogenans (strain 2CP-1 / ATCC BAA-258).